Consider the following 151-residue polypeptide: Large ribosomal subunit protein bL9 (151 aa).

The protein belongs to the bacterial ribosomal protein bL9 family.

In terms of biological role, binds to the 23S rRNA. The chain is Large ribosomal subunit protein bL9 from Prochlorococcus marinus (strain MIT 9312).